Here is a 197-residue protein sequence, read N- to C-terminus: 3-isopropylmalate dehydratase small subunit (197 aa).

Belongs to the LeuD family. LeuD type 1 subfamily. As to quaternary structure, heterodimer of LeuC and LeuD.

It carries out the reaction (2R,3S)-3-isopropylmalate = (2S)-2-isopropylmalate. The protein operates within amino-acid biosynthesis; L-leucine biosynthesis; L-leucine from 3-methyl-2-oxobutanoate: step 2/4. Functionally, catalyzes the isomerization between 2-isopropylmalate and 3-isopropylmalate, via the formation of 2-isopropylmaleate. The sequence is that of 3-isopropylmalate dehydratase small subunit from Streptococcus suis (strain 98HAH33).